The chain runs to 277 residues: Shikimate dehydrogenase (NADP(+)) (277 aa).

Residues 17-19 (SRS) and T64 contribute to the shikimate site. Catalysis depends on K68, which acts as the Proton acceptor. Residues N88 and D103 each contribute to the shikimate site. Residues 128–132 (GAGGS), 152–157 (NRTLDR), and L217 each bind NADP(+). Y219 is a binding site for shikimate. G240 provides a ligand contact to NADP(+).

Belongs to the shikimate dehydrogenase family. As to quaternary structure, homodimer.

The catalysed reaction is shikimate + NADP(+) = 3-dehydroshikimate + NADPH + H(+). It participates in metabolic intermediate biosynthesis; chorismate biosynthesis; chorismate from D-erythrose 4-phosphate and phosphoenolpyruvate: step 4/7. Its function is as follows. Involved in the biosynthesis of the chorismate, which leads to the biosynthesis of aromatic amino acids. Catalyzes the reversible NADPH linked reduction of 3-dehydroshikimate (DHSA) to yield shikimate (SA). The chain is Shikimate dehydrogenase (NADP(+)) from Rhodopseudomonas palustris (strain BisB18).